The following is a 398-amino-acid chain: NADH-quinone oxidoreductase subunit D (398 aa).

Belongs to the complex I 49 kDa subunit family. In terms of assembly, NDH-1 is composed of 14 different subunits. Subunits NuoB, C, D, E, F, and G constitute the peripheral sector of the complex.

It localises to the cell inner membrane. It catalyses the reaction a quinone + NADH + 5 H(+)(in) = a quinol + NAD(+) + 4 H(+)(out). NDH-1 shuttles electrons from NADH, via FMN and iron-sulfur (Fe-S) centers, to quinones in the respiratory chain. The immediate electron acceptor for the enzyme in this species is believed to be ubiquinone. Couples the redox reaction to proton translocation (for every two electrons transferred, four hydrogen ions are translocated across the cytoplasmic membrane), and thus conserves the redox energy in a proton gradient. The chain is NADH-quinone oxidoreductase subunit D from Bradyrhizobium diazoefficiens (strain JCM 10833 / BCRC 13528 / IAM 13628 / NBRC 14792 / USDA 110).